The primary structure comprises 211 residues: FMN-dependent NADH:quinone oxidoreductase (211 aa).

17–19 lines the FMN pocket; sequence SYS.

It belongs to the azoreductase type 1 family. Homodimer. Requires FMN as cofactor.

The catalysed reaction is 2 a quinone + NADH + H(+) = 2 a 1,4-benzosemiquinone + NAD(+). It carries out the reaction N,N-dimethyl-1,4-phenylenediamine + anthranilate + 2 NAD(+) = 2-(4-dimethylaminophenyl)diazenylbenzoate + 2 NADH + 2 H(+). In terms of biological role, quinone reductase that provides resistance to thiol-specific stress caused by electrophilic quinones. Also exhibits azoreductase activity. Catalyzes the reductive cleavage of the azo bond in aromatic azo compounds to the corresponding amines. This is FMN-dependent NADH:quinone oxidoreductase from Bacillus pumilus (strain SAFR-032).